Here is a 23-residue protein sequence, read N- to C-terminus: Laccase-1 (23 aa).

This sequence belongs to the multicopper oxidase family. Requires Cu cation as cofactor.

It localises to the secreted. The catalysed reaction is 4 hydroquinone + O2 = 4 benzosemiquinone + 2 H2O. Strongly inhibited by sodium azide, sodium cyanide, Li(+), Sn(+), Hg(2+), and the disulfide-reducing agents beta-mercaptoethanol, dithiothreitol and thioglycolic acid. Moderately inhibited by Mn(2+) and Fe(2+), inhibition by these metal ions is stronger at 0.1 mM than at 1 mM. Moderately inhibited by Cu(2+). Functionally, lignin degradation and detoxification of lignin-derived products. Demethylates eucalyptus hard wood lignin. Has high activity against the non-phenolic heterocyclic compound ABTS, and lower activity against the phenolic substrates syringic acid, caffeic acid, syringaldazine, vanillic acid, catechol and levodihydroxyphenylalanine. In Galerina sp, this protein is Laccase-1.